The chain runs to 258 residues: Trans-aconitate 2-methyltransferase (258 aa).

Belongs to the methyltransferase superfamily. Tam family.

It is found in the cytoplasm. It catalyses the reaction trans-aconitate + S-adenosyl-L-methionine = (E)-3-(methoxycarbonyl)pent-2-enedioate + S-adenosyl-L-homocysteine. Its function is as follows. Catalyzes the S-adenosylmethionine monomethyl esterification of trans-aconitate. In Methylobacterium nodulans (strain LMG 21967 / CNCM I-2342 / ORS 2060), this protein is Trans-aconitate 2-methyltransferase.